Consider the following 804-residue polypeptide: Lon protease 2 (804 aa).

The Lon N-terminal domain occupies M6–L199. G362–T369 is an ATP binding site. The Lon proteolytic domain occupies E598–G779. Active-site residues include S685 and K728.

This sequence belongs to the peptidase S16 family. Homohexamer. Organized in a ring with a central cavity.

The protein resides in the cytoplasm. It catalyses the reaction Hydrolysis of proteins in presence of ATP.. In terms of biological role, ATP-dependent serine protease that mediates the selective degradation of mutant and abnormal proteins as well as certain short-lived regulatory proteins. Required for cellular homeostasis and for survival from DNA damage and developmental changes induced by stress. Degrades polypeptides processively to yield small peptide fragments that are 5 to 10 amino acids long. Binds to DNA in a double-stranded, site-specific manner. The polypeptide is Lon protease 2 (Thermus thermophilus (strain ATCC BAA-163 / DSM 7039 / HB27)).